Reading from the N-terminus, the 417-residue chain is Signal recognition particle receptor FtsY (417 aa).

GTP contacts are provided by residues 228 to 235 (GINGTGKT), 310 to 314 (DTAGR), and 368 to 371 (TKID).

This sequence belongs to the GTP-binding SRP family. FtsY subfamily. As to quaternary structure, part of the signal recognition particle protein translocation system, which is composed of SRP and FtsY.

Its subcellular location is the cell membrane. It is found in the cytoplasm. The enzyme catalyses GTP + H2O = GDP + phosphate + H(+). Involved in targeting and insertion of nascent membrane proteins into the cytoplasmic membrane. Acts as a receptor for the complex formed by the signal recognition particle (SRP) and the ribosome-nascent chain (RNC). The sequence is that of Signal recognition particle receptor FtsY from Methanosarcina acetivorans (strain ATCC 35395 / DSM 2834 / JCM 12185 / C2A).